Reading from the N-terminus, the 232-residue chain is Aspartate racemase (232 aa).

49–51 (DRT) serves as a coordination point for substrate. The Proton donor/acceptor role is filled by Cys84. Substrate is bound by residues 85–87 (NTA) and Lys166. Cys195 acts as the Proton donor/acceptor in catalysis.

It belongs to the aspartate/glutamate racemases family.

It carries out the reaction L-aspartate = D-aspartate. In Thermococcus sp. (strain KS-8), this protein is Aspartate racemase.